A 203-amino-acid polypeptide reads, in one-letter code: Orotate phosphoribosyltransferase (203 aa).

5-phospho-alpha-D-ribose 1-diphosphate is bound by residues Arg-94, Lys-98, His-100, and 120–128 (EDLISTGGS). Ser-124 serves as a coordination point for orotate.

The protein belongs to the purine/pyrimidine phosphoribosyltransferase family. PyrE subfamily. In terms of assembly, homodimer. Requires Mg(2+) as cofactor.

It carries out the reaction orotidine 5'-phosphate + diphosphate = orotate + 5-phospho-alpha-D-ribose 1-diphosphate. The protein operates within pyrimidine metabolism; UMP biosynthesis via de novo pathway; UMP from orotate: step 1/2. Functionally, catalyzes the transfer of a ribosyl phosphate group from 5-phosphoribose 1-diphosphate to orotate, leading to the formation of orotidine monophosphate (OMP). In Staphylococcus aureus (strain COL), this protein is Orotate phosphoribosyltransferase.